The sequence spans 397 residues: Multidrug efflux pump subunit AcrA (397 aa).

Residues 1–24 (MNKNRGFTPLAVVLMLSGSLALTG) form the signal peptide. Cys25 carries N-palmitoyl cysteine lipidation. Cys25 carries the S-diacylglycerol cysteine lipid modification. Residues 98–172 (PATYQATYDS…AVETARINLA (75 aa)) are a coiled coil. Residues 377-397 (EVTADNNQQAASGAQPEQSKS) are disordered. A compositionally biased stretch (polar residues) spans 379–397 (TADNNQQAASGAQPEQSKS).

The protein belongs to the membrane fusion protein (MFP) (TC 8.A.1) family. Monomeric in solution. Homotrimeric; interacts independently with AcrB and TolC as well as AcrZ. Part of the AcrA-AcrB-TolC efflux pump.

The protein resides in the cell inner membrane. AcrA-AcrB-AcrZ-TolC is a drug efflux protein complex with broad substrate specificity that uses the proton motive force to export substrates. This subunit may act as an adapter protein that links AcrB and TolC stably together. This chain is Multidrug efflux pump subunit AcrA (acrA), found in Escherichia coli O157:H7.